We begin with the raw amino-acid sequence, 536 residues long: Lysosomal acid glucosylceramidase (536 aa).

A signal peptide spans 1 to 39 (MEFSSPSREECPKPSGRVSIMAGSLTGLLLLQAVSWASG). Cystine bridges form between Cys-43–Cys-55 and Cys-57–Cys-62. Residues Asn-58, Asn-98, and Asn-185 are each glycosylated (N-linked (GlcNAc...) asparagine). The active-site Proton donor is Glu-274. Residue Asn-309 is glycosylated (N-linked (GlcNAc...) asparagine). Catalysis depends on Glu-379, which acts as the Nucleophile. An N-linked (GlcNAc...) asparagine glycan is attached at Asn-501.

This sequence belongs to the glycosyl hydrolase 30 family. Interacts with saposin-C. Interacts with SCARB2. Interacts with TCP1. Interacts with GRN; this interaction prevents aggregation of GBA1-SCARB2 complex via interaction with HSPA1A upon stress.

The protein localises to the lysosome membrane. The catalysed reaction is a beta-D-glucosyl-(1&lt;-&gt;1')-N-acylsphing-4-enine + H2O = an N-acylsphing-4-enine + D-glucose. It carries out the reaction a beta-D-galactosyl-(1&lt;-&gt;1')-N-acylsphing-4-enine + H2O = an N-acylsphing-4-enine + D-galactose. It catalyses the reaction cholesteryl 3-beta-D-glucoside + H2O = cholesterol + D-glucose. The enzyme catalyses a beta-D-glucosyl-(1&lt;-&gt;1')-N-acylsphing-4-enine + cholesterol = cholesteryl 3-beta-D-glucoside + an N-acylsphing-4-enine. The catalysed reaction is beta-D-glucosyl-N-(9Z-octadecenoyl)-sphing-4E-enine + cholesterol = N-(9Z-octadecenoyl)-sphing-4-enine + cholesteryl 3-beta-D-glucoside. It carries out the reaction beta-D-glucosyl-N-octanoylsphing-4E-enine + cholesterol = N-octanoylsphing-4-enine + cholesteryl 3-beta-D-glucoside. It catalyses the reaction beta-D-glucosyl-N-dodecanoylsphing-4-enine + cholesterol = N-dodecanoylsphing-4-enine + cholesteryl 3-beta-D-glucoside. The enzyme catalyses beta-D-glucosyl-(1&lt;-&gt;1)-N-octadecanoylsphing-4-enine + cholesterol = N-octadecanoylsphing-4-enine + cholesteryl 3-beta-D-glucoside. The catalysed reaction is beta-D-glucosyl-(1&lt;-&gt;1')-N-(15Z-tetracosenoyl)-sphing-4-enine + cholesterol = N-(15Z-tetracosenoyl)-sphing-4-enine + cholesteryl 3-beta-D-glucoside. It carries out the reaction a beta-D-galactosyl-(1&lt;-&gt;1')-N-acylsphing-4-enine + cholesterol = cholesteryl 3-beta-D-galactoside + an N-acylsphing-4-enine. It catalyses the reaction 1-(beta-D-galactosyl)-N-dodecanoylsphing-4-enine + cholesterol = cholesteryl 3-beta-D-galactoside + N-dodecanoylsphing-4-enine. The enzyme catalyses a beta-D-xylosyl-(1&lt;-&gt;1')-N-acylsphing-4-enine + cholesterol = cholesteryl 3-beta-D-xyloside + an N-acylsphing-4-enine. The catalysed reaction is beta-D-xylosyl-(1&lt;-&gt;1')-N-(9Z-octadecenoyl)-sphing-4-enine + cholesterol = cholesteryl 3-beta-D-xyloside + N-(9Z-octadecenoyl)-sphing-4-enine. It participates in steroid metabolism; cholesterol metabolism. Its pathway is sphingolipid metabolism. Its function is as follows. Glucosylceramidase that catalyzes, within the lysosomal compartment, the hydrolysis of glucosylceramides/GlcCers (such as beta-D-glucosyl-(1&lt;-&gt;1')-N-acylsphing-4-enine) into free ceramides (such as N-acylsphing-4-enine) and glucose. Plays a central role in the degradation of complex lipids and the turnover of cellular membranes. Through the production of ceramides, participates in the PKC-activated salvage pathway of ceramide formation. Catalyzes the glucosylation of cholesterol, through a transglucosylation reaction where glucose is transferred from GlcCer to cholesterol. GlcCer containing mono-unsaturated fatty acids (such as beta-D-glucosyl-N-(9Z-octadecenoyl)-sphing-4-enine) are preferred as glucose donors for cholesterol glucosylation when compared with GlcCer containing same chain length of saturated fatty acids (such as beta-D-glucosyl-N-octadecanoyl-sphing-4-enine). Under specific conditions, may alternatively catalyze the reverse reaction, transferring glucose from cholesteryl 3-beta-D-glucoside to ceramide. Can also hydrolyze cholesteryl 3-beta-D-glucoside producing glucose and cholesterol. Catalyzes the hydrolysis of galactosylceramides/GalCers (such as beta-D-galactosyl-(1&lt;-&gt;1')-N-acylsphing-4-enine), as well as the transfer of galactose between GalCers and cholesterol in vitro, but with lower activity than with GlcCers. Contrary to GlcCer and GalCer, xylosylceramide/XylCer (such as beta-D-xyosyl-(1&lt;-&gt;1')-N-acylsphing-4-enine) is not a good substrate for hydrolysis, however it is a good xylose donor for transxylosylation activity to form cholesteryl 3-beta-D-xyloside. This is Lysosomal acid glucosylceramidase (GBA1) from Pan troglodytes (Chimpanzee).